The chain runs to 274 residues: NH(3)-dependent NAD(+) synthetase (274 aa).

ATP is bound at residue 46 to 53 (GISGGQDS). Residue D52 participates in Mg(2+) binding. R140 provides a ligand contact to deamido-NAD(+). T160 is an ATP binding site. Residue E165 coordinates Mg(2+). Deamido-NAD(+)-binding residues include K173 and D180. 2 residues coordinate ATP: K189 and T211. 260–261 (HK) serves as a coordination point for deamido-NAD(+).

This sequence belongs to the NAD synthetase family. As to quaternary structure, homodimer.

It catalyses the reaction deamido-NAD(+) + NH4(+) + ATP = AMP + diphosphate + NAD(+) + H(+). It participates in cofactor biosynthesis; NAD(+) biosynthesis; NAD(+) from deamido-NAD(+) (ammonia route): step 1/1. Its function is as follows. Catalyzes the ATP-dependent amidation of deamido-NAD to form NAD. Uses ammonia as a nitrogen source. In Streptococcus suis (strain 05ZYH33), this protein is NH(3)-dependent NAD(+) synthetase.